The primary structure comprises 521 residues: Cytochrome P450 monooxygenase astF (521 aa).

The helical transmembrane segment at 14–34 (TMATFLLPVAIGTIILLFLYG) threads the bilayer. Asn-198, Asn-218, Asn-268, and Asn-281 each carry an N-linked (GlcNAc...) asparagine glycan. Heme is bound at residue Cys-430.

The protein belongs to the cytochrome P450 family. Heme serves as cofactor.

It is found in the membrane. It functions in the pathway secondary metabolite biosynthesis; terpenoid biosynthesis. In terms of biological role, cytochrome P450 monooxygenase; part of the gene cluster that mediates the biosynthesis of astellolides, drimane-type sesquiterpene esters that show antimicrobial, anti-inflammatory, and anti-tumor activities. The first step in astellolide biosynthesis is performed by the sesquiterpene cyclase astC that catalyzes the formation of drimanyl pyrophosphate from farnesyl pyrophosphate. Drimanyl pyrophosphate is then dephosphorylated by the sesquiterpene phosphatase astI to produce drimanyl monophosphate which is further dephosphorylated to drim-8-ene-11-ol by atsK. Drim-8-ene-11-ol is converted to confertifolin, probably by the cytochrome P450 monooxygenase astD and/or the dehydrogenase astE. The cytochrome P450 monooxygenases astB, astF and astJ then hydroxylate confertifolin at C6, C14, or C15 to form trihydroxy confertifolin. The nonribosomal peptide synthetase astA catalyzes ester bond formation between trihydroxy contifolin and benzoic acid (BA) or 4-hydroxy benzoic acid (4HBA), leading to the formation of dideacetyl astellolides A and B, respectively. Finally, the O-acetyltransferase astG converts dideacetyl astellolides A and B into deacetyl astellolides A and B. The sequence is that of Cytochrome P450 monooxygenase astF from Aspergillus oryzae (strain ATCC 42149 / RIB 40) (Yellow koji mold).